The primary structure comprises 419 residues: UDP-N-acetylglucosamine 1-carboxyvinyltransferase 2 (419 aa).

22–23 (KN) lines the phosphoenolpyruvate pocket. UDP-N-acetyl-alpha-D-glucosamine is bound at residue Arg-92. Cys-116 serves as the catalytic Proton donor. Cys-116 is modified (2-(S-cysteinyl)pyruvic acid O-phosphothioketal). UDP-N-acetyl-alpha-D-glucosamine-binding positions include 121–125 (RPIDL), Asp-306, and Ile-328.

The protein belongs to the EPSP synthase family. MurA subfamily.

The protein resides in the cytoplasm. The catalysed reaction is phosphoenolpyruvate + UDP-N-acetyl-alpha-D-glucosamine = UDP-N-acetyl-3-O-(1-carboxyvinyl)-alpha-D-glucosamine + phosphate. It functions in the pathway cell wall biogenesis; peptidoglycan biosynthesis. Cell wall formation. Adds enolpyruvyl to UDP-N-acetylglucosamine. In Streptococcus pneumoniae (strain ATCC BAA-255 / R6), this protein is UDP-N-acetylglucosamine 1-carboxyvinyltransferase 2.